We begin with the raw amino-acid sequence, 720 residues long: Protein-glutamine gamma-glutamyltransferase 5 (720 aa).

Alanine 2 is modified (N-acetylalanine). Residues cysteine 278, histidine 337, and aspartate 360 contribute to the active site. The Ca(2+) site is built by asparagine 400, aspartate 402, glutamate 448, and glutamate 453. Residues 470–499 (HGSQRGAELQPSRPTSLSQDSPRSLHTPSL) are disordered. Positions 481 to 496 (SRPTSLSQDSPRSLHT) are enriched in polar residues.

It belongs to the transglutaminase superfamily. Transglutaminase family. The cofactor is Ca(2+). As to expression, expressed in foreskin keratinocytes.

It localises to the cytoplasm. It carries out the reaction L-glutaminyl-[protein] + L-lysyl-[protein] = [protein]-L-lysyl-N(6)-5-L-glutamyl-[protein] + NH4(+). Catalyzes the cross-linking of proteins and the conjugation of polyamines to proteins. Contributes to the formation of the cornified cell envelope of keratinocytes. This is Protein-glutamine gamma-glutamyltransferase 5 (TGM5) from Homo sapiens (Human).